We begin with the raw amino-acid sequence, 424 residues long: Glutathione reductase (424 aa).

Lys8 is an FAD binding site. Tyr56 contributes to the glutathione binding site. FAD is bound at residue Ala72. Ala137, Ile140, Glu143, Arg160, Arg166, and Gly236 together coordinate NADP(+). Asp277 is a binding site for FAD. Leu283 is an NADP(+) binding site. Thr285 serves as a coordination point for FAD. Arg293 is a binding site for glutathione. Residue Val316 participates in NADP(+) binding. Position 413 (His413) interacts with FAD. The active-site Proton acceptor is His413.

It belongs to the class-I pyridine nucleotide-disulfide oxidoreductase family. In terms of assembly, homodimer; disulfide-linked. FAD is required as a cofactor.

The protein localises to the mitochondrion. It is found in the cytoplasm. It carries out the reaction 2 glutathione + NADP(+) = glutathione disulfide + NADPH + H(+). Its function is as follows. Catalyzes the reduction of glutathione disulfide (GSSG) to reduced glutathione (GSH). Constitutes the major mechanism to maintain a high GSH:GSSG ratio in the cytosol. The polypeptide is Glutathione reductase (Gsr) (Rattus norvegicus (Rat)).